The chain runs to 330 residues: uncharacterized protein (330 aa).

Helical transmembrane passes span 27-47 (MGAY…VVVG), 56-76 (VFLS…MLLF), 90-110 (VFVL…CLLY), 119-139 (ESGI…FFLL), 147-167 (TLIG…FGAG), 176-196 (LFGN…TLMA), 206-226 (LAIS…FALF), 243-263 (YVLY…YSGV), 270-290 (VSGI…GVIL), and 294-314 (FEFV…VTVI). EamA domains follow at residues 38–163 (AIVG…AINL) and 187–314 (IGEA…VTVI).

Belongs to the EamA transporter family.

It is found in the cell membrane. This is an uncharacterized protein from Bacillus subtilis (strain 168).